Here is a 310-residue protein sequence, read N- to C-terminus: Putative HTH-type transcriptional regulatory protein SSO0942 (310 aa).

Residues Leu-125–Val-180 form the HTH cro/C1-type domain. The H-T-H motif DNA-binding region spans Ile-136–Lys-155.

In Saccharolobus solfataricus (strain ATCC 35092 / DSM 1617 / JCM 11322 / P2) (Sulfolobus solfataricus), this protein is Putative HTH-type transcriptional regulatory protein SSO0942.